The following is a 158-amino-acid chain: 3-dehydroquinate dehydratase (158 aa).

Residue tyrosine 24 is the Proton acceptor of the active site. Asparagine 75, histidine 81, and aspartate 88 together coordinate substrate. Histidine 101 (proton donor) is an active-site residue. Substrate-binding positions include 102-103 (LS) and arginine 112.

It belongs to the type-II 3-dehydroquinase family. In terms of assembly, homododecamer.

The catalysed reaction is 3-dehydroquinate = 3-dehydroshikimate + H2O. Its pathway is metabolic intermediate biosynthesis; chorismate biosynthesis; chorismate from D-erythrose 4-phosphate and phosphoenolpyruvate: step 3/7. Its function is as follows. Catalyzes a trans-dehydration via an enolate intermediate. The polypeptide is 3-dehydroquinate dehydratase (Bartonella bacilliformis (strain ATCC 35685 / KC583 / Herrer 020/F12,63)).